The following is a 76-amino-acid chain: Small ribosomal subunit protein bS21C (76 aa).

Residues 52 to 76 (GRQRKLARKQMQREGLLPTKPRKDK) form a disordered region.

The protein belongs to the bacterial ribosomal protein bS21 family.

This chain is Small ribosomal subunit protein bS21C (rpsU3), found in Agrobacterium fabrum (strain C58 / ATCC 33970) (Agrobacterium tumefaciens (strain C58)).